Reading from the N-terminus, the 341-residue chain is uncharacterized protein (341 aa).

The segment at 125–146 (DTVKHNGSGPRPEQASSHVHYS) is disordered.

Belongs to the cycloisomerase 2 family.

This is an uncharacterized protein from Lactococcus lactis subsp. cremoris (strain MG1363).